The sequence spans 169 residues: Peptide deformylase (169 aa).

Fe cation is bound by residues Cys91 and His133. The active site involves Glu134. His137 contacts Fe cation.

Belongs to the polypeptide deformylase family. It depends on Fe(2+) as a cofactor.

It carries out the reaction N-terminal N-formyl-L-methionyl-[peptide] + H2O = N-terminal L-methionyl-[peptide] + formate. In terms of biological role, removes the formyl group from the N-terminal Met of newly synthesized proteins. Requires at least a dipeptide for an efficient rate of reaction. N-terminal L-methionine is a prerequisite for activity but the enzyme has broad specificity at other positions. This Hydrogenovibrio crunogenus (strain DSM 25203 / XCL-2) (Thiomicrospira crunogena) protein is Peptide deformylase.